The sequence spans 467 residues: F-box only protein 6 (467 aa).

One can recognise an F-box domain in the interval 114–163; sequence QEIWQEFPQDLFEDVVSRLPMATFFQFRAVCRKWNALIDSDSFSRCFTEL. 3 Kelch repeats span residues 163–211, 252–305, and 406–456; these read LPQT…MASA, GMTL…NFKS, and CLGN…IACG.

This is F-box only protein 6 (FBX6) from Arabidopsis thaliana (Mouse-ear cress).